A 316-amino-acid chain; its full sequence is 4-hydroxy-3-methylbut-2-enyl diphosphate reductase (316 aa).

Cysteine 12 contributes to the [4Fe-4S] cluster binding site. Positions 41 and 74 each coordinate (2E)-4-hydroxy-3-methylbut-2-enyl diphosphate. Positions 41 and 74 each coordinate dimethylallyl diphosphate. 2 residues coordinate isopentenyl diphosphate: histidine 41 and histidine 74. Cysteine 96 contributes to the [4Fe-4S] cluster binding site. Histidine 124 provides a ligand contact to (2E)-4-hydroxy-3-methylbut-2-enyl diphosphate. Histidine 124 is a dimethylallyl diphosphate binding site. Histidine 124 contacts isopentenyl diphosphate. The active-site Proton donor is the glutamate 126. Threonine 168 contacts (2E)-4-hydroxy-3-methylbut-2-enyl diphosphate. Residue cysteine 198 coordinates [4Fe-4S] cluster. (2E)-4-hydroxy-3-methylbut-2-enyl diphosphate contacts are provided by serine 226, serine 227, asparagine 228, and serine 270. Dimethylallyl diphosphate-binding residues include serine 226, serine 227, asparagine 228, and serine 270. 4 residues coordinate isopentenyl diphosphate: serine 226, serine 227, asparagine 228, and serine 270.

This sequence belongs to the IspH family. It depends on [4Fe-4S] cluster as a cofactor.

The catalysed reaction is isopentenyl diphosphate + 2 oxidized [2Fe-2S]-[ferredoxin] + H2O = (2E)-4-hydroxy-3-methylbut-2-enyl diphosphate + 2 reduced [2Fe-2S]-[ferredoxin] + 2 H(+). It catalyses the reaction dimethylallyl diphosphate + 2 oxidized [2Fe-2S]-[ferredoxin] + H2O = (2E)-4-hydroxy-3-methylbut-2-enyl diphosphate + 2 reduced [2Fe-2S]-[ferredoxin] + 2 H(+). It participates in isoprenoid biosynthesis; dimethylallyl diphosphate biosynthesis; dimethylallyl diphosphate from (2E)-4-hydroxy-3-methylbutenyl diphosphate: step 1/1. Its pathway is isoprenoid biosynthesis; isopentenyl diphosphate biosynthesis via DXP pathway; isopentenyl diphosphate from 1-deoxy-D-xylulose 5-phosphate: step 6/6. In terms of biological role, catalyzes the conversion of 1-hydroxy-2-methyl-2-(E)-butenyl 4-diphosphate (HMBPP) into a mixture of isopentenyl diphosphate (IPP) and dimethylallyl diphosphate (DMAPP). Acts in the terminal step of the DOXP/MEP pathway for isoprenoid precursor biosynthesis. The polypeptide is 4-hydroxy-3-methylbut-2-enyl diphosphate reductase (Acinetobacter baumannii (strain AB307-0294)).